Here is a 286-residue protein sequence, read N- to C-terminus: Release factor glutamine methyltransferase (286 aa).

Residues 121–125, Asp144, Trp172, and Asn188 contribute to the S-adenosyl-L-methionine site; that span reads GTGTG. Residue 188–191 coordinates substrate; the sequence is NPPY.

Belongs to the protein N5-glutamine methyltransferase family. PrmC subfamily.

The catalysed reaction is L-glutaminyl-[peptide chain release factor] + S-adenosyl-L-methionine = N(5)-methyl-L-glutaminyl-[peptide chain release factor] + S-adenosyl-L-homocysteine + H(+). In terms of biological role, methylates the class 1 translation termination release factors RF1/PrfA and RF2/PrfB on the glutamine residue of the universally conserved GGQ motif. The protein is Release factor glutamine methyltransferase of Vibrio cholerae serotype O1 (strain ATCC 39315 / El Tor Inaba N16961).